A 146-amino-acid polypeptide reads, in one-letter code: Ferredoxin-type protein FwdE (146 aa).

4Fe-4S ferredoxin-type domains are found at residues 90–115 (IKLF…TLDN) and 116–145 (FTVG…FIKE). [4Fe-4S] cluster contacts are provided by C125, C128, C131, and C135.

[4Fe-4S] cluster serves as cofactor.

The sequence is that of Ferredoxin-type protein FwdE (fwdE) from Methanocaldococcus jannaschii (strain ATCC 43067 / DSM 2661 / JAL-1 / JCM 10045 / NBRC 100440) (Methanococcus jannaschii).